The chain runs to 243 residues: Myelin protein P0 (243 aa).

An N-terminal signal peptide occupies residues 1–26; that stretch reads MESSGLRAPCSLLVLLSALVLPPTLA. Residues 27–141 form the Ig-like V-type domain; sequence IEVYTDREVY…VGKSSYVHLQ (115 aa). The Extracellular segment spans residues 27–154; it reads IEVYTDREVY…KGAARAGLVL (128 aa). Residues cysteine 47 and cysteine 123 are joined by a disulfide bond. A glycan (N-linked (GlcNAc...) asparagine) is linked at asparagine 118. A helical transmembrane segment spans residues 155–175; sequence GIIIAVALALVIVVTILILLI. Topologically, residues 176–243 are cytoplasmic; that stretch reads RYCWLRRQVR…GIGDSRKDRK (68 aa). A disordered region spans residues 201–243; it reads AKDSSKRSSRQTPILYAMLDQTRGKASEKKGKGGIGDSRKDRK. The segment covering 222–243 has biased composition (basic and acidic residues); sequence TRGKASEKKGKGGIGDSRKDRK.

This sequence belongs to the myelin P0 protein family.

It is found in the cell membrane. In terms of biological role, creation of an extracellular membrane face which guides the wrapping process and ultimately compacts adjacent lamellae. The protein is Myelin protein P0 (mpz) of Xenopus tropicalis (Western clawed frog).